A 321-amino-acid polypeptide reads, in one-letter code: Olfactory receptor 56B34 (321 aa).

Residues 1-36 (MGTALHETNSSEVHVSEFILLGFPGIHEFQIWLSLP) are Extracellular-facing. The chain crosses the membrane as a helical span at residues 37–57 (MALLYIVALGANLLILITIYL). Residues 58–70 (EPTLHQPMYQFLG) are Cytoplasmic-facing. A helical membrane pass occupies residues 71–91 (ILAAVDIGLATTSMPKILAIL). The Extracellular portion of the chain corresponds to 92–105 (WFDAKTISLPECFA). A disulfide bridge connects residues Cys-103 and Cys-185. A helical membrane pass occupies residues 106 to 126 (QIYAIHTFMCMESGVFLCMAI). Over 127–128 (DR) the chain is Cytoplasmic. Residues 129–149 (YVAICYPLQYPSIVTEAFVIK) traverse the membrane as a helical segment. Residues 150–207 (ATLSMLLRNGLLTIPVPVLAAQRQYCSRNEIDHCLCSNLGVISLACDDITVNRFYQLA) are Extracellular-facing. The chain crosses the membrane as a helical span at residues 208 to 228 (LAWLVVGSDMILVYASYALII). At 229-250 (RSVLRLNSTEAASKALSTCSSH) the chain is on the cytoplasmic side. Residues 251–271 (LILIMFYYTAIVIVSVTHLAG) traverse the membrane as a helical segment. Topologically, residues 272 to 275 (RRVP) are extracellular. A helical transmembrane segment spans residues 276–296 (LIPVLLNVMHIVIPPSLNPVV). Residues 297-321 (YALRTQELKVGFRKVFSLSEFVSRK) are Cytoplasmic-facing.

This sequence belongs to the G-protein coupled receptor 1 family.

The protein localises to the cell membrane. Functionally, odorant receptor. The polypeptide is Olfactory receptor 56B34 (Mus musculus (Mouse)).